We begin with the raw amino-acid sequence, 201 residues long: Recombination protein RecR (201 aa).

The C4-type zinc-finger motif lies at 60-75 (CSRCGNVDTVDPCTVC). A Toprim domain is found at 83–178 (SVIIVVEDVS…KITRLAHGVP (96 aa)).

Belongs to the RecR family.

May play a role in DNA repair. It seems to be involved in an RecBC-independent recombinational process of DNA repair. It may act with RecF and RecO. This Rhizobium etli (strain CIAT 652) protein is Recombination protein RecR.